The following is a 231-amino-acid chain: tRNA (guanine-N(1)-)-methyltransferase (231 aa).

S-adenosyl-L-methionine is bound by residues G112 and 132–137 (LGDFVL).

Belongs to the RNA methyltransferase TrmD family. In terms of assembly, homodimer.

It is found in the cytoplasm. The enzyme catalyses guanosine(37) in tRNA + S-adenosyl-L-methionine = N(1)-methylguanosine(37) in tRNA + S-adenosyl-L-homocysteine + H(+). In terms of biological role, specifically methylates guanosine-37 in various tRNAs. The polypeptide is tRNA (guanine-N(1)-)-methyltransferase (Microcystis aeruginosa (strain NIES-843 / IAM M-2473)).